The sequence spans 1288 residues: MGGPEGRFHFAIDRGGTFTDVFAQCPGGHVRVLKLLSEDPANYVDAPTEGIRRILEQEGGVLLPRDRPLDTSRIASIRMGTTVATNALLERQGERVALLVTRGFRDLLHVGTQARADLFDLAVPMPETLYEEVLEVDERVVLYRGEPGAGTPVKGCTGDLLEVQQPVDLGGLRGKLEGLLSRGIRSLAVVLMHSYTWAQHEQQVGALARELGFTHVSLSSEAMPMVRIVPRGHTACADAYLTPTIQRYVQGFRRGFQGQLKDVQVLFMRSDGGLAPMDSFSGSRAVLSGPAGGVVGYSATTYRVEGGQPVIGFDMGGTSTDVSRYAGEFEHVFEASTAGVTLQAPQLDINTVAAGGGSRLFFRSGLFVVGPESAGAHPGPACYRKGGPVTVTDANLVLGRLLPASFPCIFGPGEDQPLSPEASRKALEAVATEVNSFLTNGPCPASPLSLEEVAMGFVRVANEAMCRPIRALTQARGHDPSAHVLACFGGAGGQHACAIARALGMDTVHIHRHSGLLSALGLALADVVHEAQEPCSLPYAPETFAQLDQRLGRLEEQCVEALRAQGFPRSQISTESFLHLRYQGTDCALMVSAHQHPASARSPRAGDFGAAFVERYMREFGFIIPERPVVVDDVRVRGTGSSSLRLEDVPKAHSGPPRVDKMTQCYFEGGYQETPVYLLGELGCGHKLQGPCLIIDSNSTILVEPGCQAEVTETGDIRISVGAETASVVGTQLDPIHLSIFSHRFMSIAEQMGRILQRTAISTNIKERLDFSCALFGPDGGLVSNAPHIPVHLGAMQETVQFQIQQLGADLHPGDVLLSNHPSAGGSHLPDLTVITPVFWPGQTRPVFYVASRGHHADIGGITPGSMPPHSTSLQQEGAVFLSFKLVHGGVFQEEAVTEALRAPGKIPGCSGTRNLHDNLSDLRAQVAANQKGIQLVGELIGQYGLDVVQAYMGHIQANAELAVRDMLRAFGTARQARGLPLEVSAEDHMDDGSPIRLRVQINMSQGSAVFDFSGSGPEVFGNLNAPRAITLSALIYCLRCLVGRDIPLNQGCLAPVRVVIPKGSILDPSPDAAVVGGNVLTSQRVVDVILGAFGACAASQGCMNNVTLGNAHMGYYETVAGGAGAGPGWHGRSGVHSHMTNTRITDPEILESRYPVILRRFELRLGSGGRGRFRGGDGIIRELLFREEALLSVLTERRAFQPYGLMGGEPGARGLNLLIRKDGRTVNLGGKTSVPVYPGDVFCLHTPGGGGYGDPEDPAPLPGSPLQPLAFPERGSVYEYRRAQEAV.

Thr-151 carries the post-translational modification Phosphothreonine. A disordered region spans residues 1249-1269 (GGGGYGDPEDPAPLPGSPLQP). Ser-1265 carries the phosphoserine modification.

The protein belongs to the oxoprolinase family. In terms of assembly, homodimer. Expressed in coronary artery and kidney.

The protein resides in the cytoplasm. Its subcellular location is the cytosol. The enzyme catalyses 5-oxo-L-proline + ATP + 2 H2O = L-glutamate + ADP + phosphate + H(+). In terms of biological role, catalyzes the cleavage of 5-oxo-L-proline to form L-glutamate coupled to the hydrolysis of ATP to ADP and inorganic phosphate. The protein is 5-oxoprolinase (OPLAH) of Bos taurus (Bovine).